We begin with the raw amino-acid sequence, 140 residues long: MNKQRTLSIIKPDAVEKNIIGEIYRRFEKSGLKVVAAKMKHLSKAEAEGFYAVHKDRPFFSALVEFMISGPVMIQVLEGDNAIAKNRKLMGATNPKEAEAGTIRADFADSIDANAVHGSDAPETAAQEIKYFFSDIEIVG.

ATP is bound by residues Lys11, Phe59, Arg87, Thr93, Arg104, and Asn114. The active-site Pros-phosphohistidine intermediate is the His117.

This sequence belongs to the NDK family. In terms of assembly, homotetramer. Mg(2+) serves as cofactor.

The protein resides in the cytoplasm. It carries out the reaction a 2'-deoxyribonucleoside 5'-diphosphate + ATP = a 2'-deoxyribonucleoside 5'-triphosphate + ADP. The catalysed reaction is a ribonucleoside 5'-diphosphate + ATP = a ribonucleoside 5'-triphosphate + ADP. Major role in the synthesis of nucleoside triphosphates other than ATP. The ATP gamma phosphate is transferred to the NDP beta phosphate via a ping-pong mechanism, using a phosphorylated active-site intermediate. The polypeptide is Nucleoside diphosphate kinase (Francisella philomiragia subsp. philomiragia (strain ATCC 25017 / CCUG 19701 / FSC 153 / O#319-036)).